Reading from the N-terminus, the 455-residue chain is Bifunctional protein GlmU (455 aa).

Residues 1–228 (MNNTLTTIIL…EFEIEGVNNR (228 aa)) form a pyrophosphorylase region. Residues 10–13 (LAAG), K24, Q75, 80–81 (GT), 102–104 (YGD), G138, E153, N168, and N226 contribute to the UDP-N-acetyl-alpha-D-glucosamine site. Residue D104 coordinates Mg(2+). N226 contacts Mg(2+). Residues 229–249 (QQLAQLERKWQAKLVEDLQVQ) are linker. Residues 250–455 (GVQFADPNRV…DNYQRPEKKK (206 aa)) form an N-acetyltransferase region. UDP-N-acetyl-alpha-D-glucosamine-binding residues include R332 and K350. H362 acts as the Proton acceptor in catalysis. Residues Y365 and N376 each coordinate UDP-N-acetyl-alpha-D-glucosamine. Residues A379, 385-386 (NY), A422, and R439 each bind acetyl-CoA.

It in the N-terminal section; belongs to the N-acetylglucosamine-1-phosphate uridyltransferase family. The protein in the C-terminal section; belongs to the transferase hexapeptide repeat family. Homotrimer. Mg(2+) serves as cofactor.

It localises to the cytoplasm. It catalyses the reaction alpha-D-glucosamine 1-phosphate + acetyl-CoA = N-acetyl-alpha-D-glucosamine 1-phosphate + CoA + H(+). The enzyme catalyses N-acetyl-alpha-D-glucosamine 1-phosphate + UTP + H(+) = UDP-N-acetyl-alpha-D-glucosamine + diphosphate. It participates in nucleotide-sugar biosynthesis; UDP-N-acetyl-alpha-D-glucosamine biosynthesis; N-acetyl-alpha-D-glucosamine 1-phosphate from alpha-D-glucosamine 6-phosphate (route II): step 2/2. Its pathway is nucleotide-sugar biosynthesis; UDP-N-acetyl-alpha-D-glucosamine biosynthesis; UDP-N-acetyl-alpha-D-glucosamine from N-acetyl-alpha-D-glucosamine 1-phosphate: step 1/1. It functions in the pathway bacterial outer membrane biogenesis; LPS lipid A biosynthesis. Catalyzes the last two sequential reactions in the de novo biosynthetic pathway for UDP-N-acetylglucosamine (UDP-GlcNAc). The C-terminal domain catalyzes the transfer of acetyl group from acetyl coenzyme A to glucosamine-1-phosphate (GlcN-1-P) to produce N-acetylglucosamine-1-phosphate (GlcNAc-1-P), which is converted into UDP-GlcNAc by the transfer of uridine 5-monophosphate (from uridine 5-triphosphate), a reaction catalyzed by the N-terminal domain. The polypeptide is Bifunctional protein GlmU (Psychrobacter sp. (strain PRwf-1)).